Consider the following 351-residue polypeptide: Transmembrane protein 184 homolog DDB_G0279555 (351 aa).

Residues 1-21 (MWIVAGVCSGVAILLSFYLIY) traverse the membrane as a helical segment. An N-linked (GlcNAc...) asparagine glycan is attached at N26. Helical transmembrane passes span 39-59 (ILIM…FVEL), 73-93 (YVLY…FDLV), 127-147 (FVLQ…VLET), 162-182 (YVWL…FLVL), and 206-226 (ILFF…FGVI). N236 is a glycosylation site (N-linked (GlcNAc...) asparagine). A helical transmembrane segment spans residues 241-261 (LQDFITCVEMVILAICHHFFF). N-linked (GlcNAc...) asparagine glycosylation is found at N301 and N304. The tract at residues 327-351 (HNHPTTKKKDEESNLLEPEDKDIII) is disordered. Over residues 339-351 (SNLLEPEDKDIII) the composition is skewed to acidic residues.

This sequence belongs to the TMEM184 family.

It is found in the cell membrane. In terms of biological role, probable transporter. This is Transmembrane protein 184 homolog DDB_G0279555 (tmem184C) from Dictyostelium discoideum (Social amoeba).